The sequence spans 184 residues: Shikimate kinase (184 aa).

Position 17–22 (17–22 (GAGKTT)) interacts with ATP. Thr21 contributes to the Mg(2+) binding site. Residues Asp39, Arg63, and Gly85 each coordinate substrate. Arg123 is a binding site for ATP. Arg142 is a binding site for substrate.

This sequence belongs to the shikimate kinase family. In terms of assembly, monomer. The cofactor is Mg(2+).

Its subcellular location is the cytoplasm. It catalyses the reaction shikimate + ATP = 3-phosphoshikimate + ADP + H(+). It participates in metabolic intermediate biosynthesis; chorismate biosynthesis; chorismate from D-erythrose 4-phosphate and phosphoenolpyruvate: step 5/7. Its function is as follows. Catalyzes the specific phosphorylation of the 3-hydroxyl group of shikimic acid using ATP as a cosubstrate. This chain is Shikimate kinase, found in Burkholderia thailandensis (strain ATCC 700388 / DSM 13276 / CCUG 48851 / CIP 106301 / E264).